Here is a 476-residue protein sequence, read N- to C-terminus: Bifunctional protein HldE (476 aa).

Residues 1–318 (MKVTLPDFRR…ENAIRGRAET (318 aa)) form a ribokinase region. ATP is bound at residue 195-198 (NLSE). The active site involves aspartate 264. The segment at 344–476 (MTNGIFDILH…IIQSIKNGLG (133 aa)) is cytidylyltransferase.

This sequence in the N-terminal section; belongs to the carbohydrate kinase PfkB family. It in the C-terminal section; belongs to the cytidylyltransferase family. Homodimer.

It catalyses the reaction D-glycero-beta-D-manno-heptose 7-phosphate + ATP = D-glycero-beta-D-manno-heptose 1,7-bisphosphate + ADP + H(+). It carries out the reaction D-glycero-beta-D-manno-heptose 1-phosphate + ATP + H(+) = ADP-D-glycero-beta-D-manno-heptose + diphosphate. The protein operates within nucleotide-sugar biosynthesis; ADP-L-glycero-beta-D-manno-heptose biosynthesis; ADP-L-glycero-beta-D-manno-heptose from D-glycero-beta-D-manno-heptose 7-phosphate: step 1/4. It functions in the pathway nucleotide-sugar biosynthesis; ADP-L-glycero-beta-D-manno-heptose biosynthesis; ADP-L-glycero-beta-D-manno-heptose from D-glycero-beta-D-manno-heptose 7-phosphate: step 3/4. Functionally, catalyzes the phosphorylation of D-glycero-D-manno-heptose 7-phosphate at the C-1 position to selectively form D-glycero-beta-D-manno-heptose-1,7-bisphosphate. Catalyzes the ADP transfer from ATP to D-glycero-beta-D-manno-heptose 1-phosphate, yielding ADP-D-glycero-beta-D-manno-heptose. In Yersinia enterocolitica serotype O:8 / biotype 1B (strain NCTC 13174 / 8081), this protein is Bifunctional protein HldE.